The chain runs to 188 residues: Myc target protein 1 (188 aa).

Residues 24 to 44 (FTVSVAIGLAIGGFLWALFVF) form a helical membrane-spanning segment. The Bipartite nuclear localization signal motif lies at 47–65 (RRRRASAPISQWSPTRRPR). Phosphoserine is present on residues serine 87, serine 90, serine 93, and serine 101.

The protein belongs to the MYCT1 family. Highly expressed in lung, heart, and skeletal muscle. Expressed in brain, eye, liver, kidney, smooth muscle, pancreas, thyroid, thymus, submaxillary gland, spleen, testis, ovary, prostate, epididymis, and uterus. Deregulated expression promotes apoptosis in response to growth factor deprivation. Overexpression in synergy with CCNB1 may promote genomic instability.

The protein localises to the nucleus membrane. Functionally, may regulate certain MYC target genes, MYC seems to be a direct upstream transcriptional activator. Does not seem to significantly affect growth cell capacity. Overexpression seems to mediate many of the known phenotypic features associated with MYC, including promotion of apoptosis, alteration of morphology, enhancement of anchorage-independent growth, tumorigenic conversion, promotion of genomic instability and inhibition of hematopoietic differentiation. This Mus musculus (Mouse) protein is Myc target protein 1 (Myct1).